Here is a 301-residue protein sequence, read N- to C-terminus: (R)-2-haloacid dehalogenase (301 aa).

It belongs to the HAD-like hydrolase superfamily. S-2-haloalkanoic acid dehalogenase family. As to quaternary structure, homotetramer.

It catalyses the reaction an (R)-2-haloacid + H2O = a (2S)-2-hydroxycarboxylate + a halide anion + H(+). Functionally, catalyzes the hydrolytic dehalogenation of small (R)-2-haloalkanoic acids to yield the corresponding (S)-2-hydroxyalkanoic acids. Acts on acids of short chain lengths, C(2) to C(4), with inversion of configuration at C-2. This is (R)-2-haloacid dehalogenase (hadD) from Pseudomonas putida (Arthrobacter siderocapsulatus).